The chain runs to 673 residues: Zinc finger and BTB domain-containing protein 16 (673 aa).

Residues 34-96 enclose the BTB domain; that stretch reads CDVVIMVDSQ…AYTATLQAKA (63 aa). Phosphoserine; by PDPK1 is present on residues Ser76, Ser184, and Ser197. Residues 200–300 are interaction with RUNX1T1; the sequence is KAAVDSLMTI…SARELHYGRE (101 aa). Disordered regions lie at residues 215–236 and 249–332; these read QGTLQPPAGPEEPTLAGGGRHP and DEVP…KHLG. Ser256 is modified (phosphoserine; by PDPK1). Thr282 bears the Phosphothreonine; by PDPK1 mark. Basic and acidic residues-rich tracts occupy residues 293–302 and 319–331; these read RELHYGREES and RPEHPAPPPEKHL. C2H2-type zinc fingers lie at residues 404-426, 432-454, 461-483, 490-512, 518-540, 546-568, 574-596, and 602-624; these read EQCSVCGVELPDNEAVEQHRKLH, YGCELCGKRFLDSLRLRMHLLAH, FVCDQCGAQFSKEDALETHRQTH, VFCLLCGKRFQAQSALQQHMEVH, YICSECNRTFPSHTALKRHLRSH, YECEFCGSCFRDESTLKSHKRIH, YECNGCGKKFSLKHQLETHYRVH, and FECKLCHQRSRDYSAMIKHLRTH. Residue Ser628 is modified to Phosphoserine; by PDPK1. The segment at 630-652 adopts a C2H2-type 9 zinc-finger fold; the sequence is YQCTICTEYCPSLSSMQKHMKGH.

This sequence belongs to the krueppel C2H2-type zinc-finger protein family. Binds EPN1. Interacts with ZBTB32 and CUL3. Interacts with ATP7B. Interacts with transcriptional corepressor RUNX1T1 (via its N-terminus); the interaction increases the transcription repression activity of ZBTB16. Interacts (via C2H2-type zinc finger domains 1 and 2) with RNF112. As to expression, within the hematopoietic system, PLZF is expressed in bone marrow, early myeloid cell lines and peripheral blood mononuclear cells. Also expressed in the ovary, and at lower levels, in the kidney and lung.

The protein localises to the nucleus. The protein resides in the nuclear body. It functions in the pathway protein modification; protein ubiquitination. Its function is as follows. Acts as a transcriptional repressor. Transcriptional repression may be mediated through recruitment of histone deacetylases to target promoters. May play a role in myeloid maturation and in the development and/or maintenance of other differentiated tissues. Probable substrate-recognition component of an E3 ubiquitin-protein ligase complex which mediates the ubiquitination and subsequent proteasomal degradation of target proteins. The polypeptide is Zinc finger and BTB domain-containing protein 16 (ZBTB16) (Homo sapiens (Human)).